A 681-amino-acid polypeptide reads, in one-letter code: Glycogen-binding subunit 76A (681 aa).

5 disordered regions span residues 1–20 (MNDP…SRPP), 53–94 (LGSQ…DLQP), 232–251 (SLTE…NGHL), 285–391 (FADR…ASNL), and 405–435 (QDAT…CRPQ). The span at 59-69 (EEGEGNAEDEP) shows a compositional bias: acidic residues. The segment covering 72–91 (NGTSTNTWVNSHDSEQTVTD) has biased composition (polar residues). Composition is skewed to basic and acidic residues over residues 237-251 (EQTK…NGHL), 297-308 (RVQKESSQERVP), and 321-336 (PSDR…RVQE). Polar residues predominate over residues 353–364 (TESISTEVTTLE). Basic and acidic residues predominate over residues 365–374 (RSPEESRNDE). Residues 525–632 (AVREKQVSLE…NNYGANYCFQ (108 aa)) enclose the CBM21 domain. Phosphothreonine is present on threonine 545. Phosphoserine is present on residues serine 547 and serine 549.

In Drosophila melanogaster (Fruit fly), this protein is Glycogen-binding subunit 76A (Gbs-76A).